The primary structure comprises 246 residues: Exosome complex component Rrp41 (246 aa).

Belongs to the RNase PH family. Rrp41 subfamily. As to quaternary structure, component of the archaeal exosome complex. Forms a hexameric ring-like arrangement composed of 3 Rrp41-Rrp42 heterodimers. The hexameric ring associates with a trimer of Rrp4 and/or Csl4 subunits.

The protein resides in the cytoplasm. Catalytic component of the exosome, which is a complex involved in RNA degradation. Has 3'-&gt;5' exoribonuclease activity. Can also synthesize heteromeric RNA-tails. The protein is Exosome complex component Rrp41 of Pyrobaculum islandicum (strain DSM 4184 / JCM 9189 / GEO3).